We begin with the raw amino-acid sequence, 331 residues long: Holliday junction branch migration complex subunit RuvB (331 aa).

The segment at 1-182 is large ATPase domain (RuvB-L); the sequence is MSSDTLHKYE…FGIPLHLEFY (182 aa). Residues L21, R22, G63, K66, T67, T68, 129 to 131, R172, Y182, and R219 each bind ATP; that span reads EDY. Residue T67 participates in Mg(2+) binding. The segment at 183 to 254 is small ATPAse domain (RuvB-S); sequence SVDELVLVIK…FANSALFRLG (72 aa). A head domain (RuvB-H) region spans residues 257 to 331; that stretch reads GAGFDKMDLK…FEYLLSSKYI (75 aa). The DNA site is built by R310 and R315.

This sequence belongs to the RuvB family. In terms of assembly, homohexamer. Forms an RuvA(8)-RuvB(12)-Holliday junction (HJ) complex. HJ DNA is sandwiched between 2 RuvA tetramers; dsDNA enters through RuvA and exits via RuvB. An RuvB hexamer assembles on each DNA strand where it exits the tetramer. Each RuvB hexamer is contacted by two RuvA subunits (via domain III) on 2 adjacent RuvB subunits; this complex drives branch migration. In the full resolvosome a probable DNA-RuvA(4)-RuvB(12)-RuvC(2) complex forms which resolves the HJ.

Its subcellular location is the cytoplasm. It catalyses the reaction ATP + H2O = ADP + phosphate + H(+). Its function is as follows. The RuvA-RuvB-RuvC complex processes Holliday junction (HJ) DNA during genetic recombination and DNA repair, while the RuvA-RuvB complex plays an important role in the rescue of blocked DNA replication forks via replication fork reversal (RFR). RuvA specifically binds to HJ cruciform DNA, conferring on it an open structure. The RuvB hexamer acts as an ATP-dependent pump, pulling dsDNA into and through the RuvAB complex. RuvB forms 2 homohexamers on either side of HJ DNA bound by 1 or 2 RuvA tetramers; 4 subunits per hexamer contact DNA at a time. Coordinated motions by a converter formed by DNA-disengaged RuvB subunits stimulates ATP hydrolysis and nucleotide exchange. Immobilization of the converter enables RuvB to convert the ATP-contained energy into a lever motion, pulling 2 nucleotides of DNA out of the RuvA tetramer per ATP hydrolyzed, thus driving DNA branch migration. The RuvB motors rotate together with the DNA substrate, which together with the progressing nucleotide cycle form the mechanistic basis for DNA recombination by continuous HJ branch migration. Branch migration allows RuvC to scan DNA until it finds its consensus sequence, where it cleaves and resolves cruciform DNA. The protein is Holliday junction branch migration complex subunit RuvB of Anaplasma marginale (strain St. Maries).